We begin with the raw amino-acid sequence, 129 residues long: D-ribose pyranase (129 aa).

The active-site Proton donor is H20. Substrate contacts are provided by residues D28, H96, and 118-120 (YAN).

The protein belongs to the RbsD / FucU family. RbsD subfamily. Homodecamer.

The protein localises to the cytoplasm. The catalysed reaction is beta-D-ribopyranose = beta-D-ribofuranose. The protein operates within carbohydrate metabolism; D-ribose degradation; D-ribose 5-phosphate from beta-D-ribopyranose: step 1/2. Catalyzes the interconversion of beta-pyran and beta-furan forms of D-ribose. This chain is D-ribose pyranase, found in Exiguobacterium sp. (strain ATCC BAA-1283 / AT1b).